A 337-amino-acid polypeptide reads, in one-letter code: PHD finger protein 11 (337 aa).

A C2HC pre-PHD-type zinc finger spans residues 25–61 (KRTCALCPEGHEWSQIYFSPSGNIVAHENCLLYSSGL). A PHD-type zinc finger spans residues 91–143 (LKCSFCNKGGATVGCDLWFCKKSYHYVCAKKDQAILQVDGNHGTYKLFCPEHS). 2 disordered regions span residues 145 to 196 (EQEE…HGHT) and 301 to 337 (GDLD…GDSL). The segment covering 187–196 (HMTEEPHGHT) has biased composition (basic and acidic residues). Composition is skewed to polar residues over residues 301-312 (GDLDCSSSTSGS) and 323-337 (SQES…GDSL).

Interacts with BRCA1 and RELA.

It localises to the nucleus. Positive regulator of Th1-type cytokine gene expression. The polypeptide is PHD finger protein 11 (Phf11) (Mus musculus (Mouse)).